Consider the following 263-residue polypeptide: Shikimate dehydrogenase (NADP(+)) (263 aa).

Shikimate contacts are provided by residues 14 to 16 (SLS) and Thr-60. Lys-64 functions as the Proton acceptor in the catalytic mechanism. Shikimate contacts are provided by Asn-85 and Asp-100. Residues 123 to 127 (GAGGA), 146 to 151 (NRTPQR), and Leu-205 each bind NADP(+). Residue Tyr-207 coordinates shikimate. Residue Gly-228 participates in NADP(+) binding.

This sequence belongs to the shikimate dehydrogenase family. In terms of assembly, homodimer.

It catalyses the reaction shikimate + NADP(+) = 3-dehydroshikimate + NADPH + H(+). It participates in metabolic intermediate biosynthesis; chorismate biosynthesis; chorismate from D-erythrose 4-phosphate and phosphoenolpyruvate: step 4/7. Functionally, involved in the biosynthesis of the chorismate, which leads to the biosynthesis of aromatic amino acids. Catalyzes the reversible NADPH linked reduction of 3-dehydroshikimate (DHSA) to yield shikimate (SA). The polypeptide is Shikimate dehydrogenase (NADP(+)) (Thermus thermophilus (strain ATCC BAA-163 / DSM 7039 / HB27)).